Here is a 406-residue protein sequence, read N- to C-terminus: Putative F-box protein At5g38270 (406 aa).

The F-box domain maps to 20-67; the sequence is HDWSKLCPDILRSILESLSSTDFHRAKTVCSDWYSNWKTCVKPLCPWR.

This chain is Putative F-box protein At5g38270, found in Arabidopsis thaliana (Mouse-ear cress).